Here is a 235-residue protein sequence, read N- to C-terminus: uncharacterized protein (235 aa).

The next 3 helical transmembrane spans lie at 41–61 (IFWH…IYRL), 71–91 (LRTF…IEFP), and 129–149 (IGII…TPTI).

It localises to the membrane. This is an uncharacterized protein from Schizosaccharomyces pombe (strain 972 / ATCC 24843) (Fission yeast).